A 429-amino-acid chain; its full sequence is SET domain-containing protein 8 (429 aa).

In terms of domain architecture, SET spans 17-232; sequence KQITIKKIRK…ENEEVTINYG (216 aa).

It belongs to the class V-like SAM-binding methyltransferase superfamily.

The protein resides in the cytoplasm. It localises to the nucleus. The sequence is that of SET domain-containing protein 8 (set8) from Schizosaccharomyces pombe (strain 972 / ATCC 24843) (Fission yeast).